Reading from the N-terminus, the 151-residue chain is Ribosomal RNA large subunit methyltransferase H (151 aa).

Residues Leu70, Gly99, and 118–123 (LSKLTF) each bind S-adenosyl-L-methionine.

This sequence belongs to the RNA methyltransferase RlmH family. As to quaternary structure, homodimer.

The protein resides in the cytoplasm. It catalyses the reaction pseudouridine(1915) in 23S rRNA + S-adenosyl-L-methionine = N(3)-methylpseudouridine(1915) in 23S rRNA + S-adenosyl-L-homocysteine + H(+). In terms of biological role, specifically methylates the pseudouridine at position 1915 (m3Psi1915) in 23S rRNA. This Gloeobacter violaceus (strain ATCC 29082 / PCC 7421) protein is Ribosomal RNA large subunit methyltransferase H.